Consider the following 101-residue polypeptide: Small ribosomal subunit protein uS14 (101 aa).

The span at 1–10 shows a compositional bias: basic and acidic residues; sequence MAKKSSIEKN. The interval 1-25 is disordered; it reads MAKKSSIEKNNRRKKMAKNAAPKRE.

This sequence belongs to the universal ribosomal protein uS14 family. In terms of assembly, part of the 30S ribosomal subunit. Contacts proteins S3 and S10.

Its function is as follows. Binds 16S rRNA, required for the assembly of 30S particles and may also be responsible for determining the conformation of the 16S rRNA at the A site. The polypeptide is Small ribosomal subunit protein uS14 (Rhodopseudomonas palustris (strain BisA53)).